We begin with the raw amino-acid sequence, 297 residues long: HTH-type transcriptional regulator ArgP (297 aa).

Residues 4-60 (PDYRTLQALDAVIRERGFERAAQKLCITQSAVSQRIKQLENMFGQPLLVRTVPPRPT) enclose the HTH lysR-type domain. The H-T-H motif DNA-binding region spans 21–40 (FERAAQKLCITQSAVSQRIK).

This sequence belongs to the LysR transcriptional regulatory family. Homodimer.

Its function is as follows. Controls the transcription of genes involved in arginine and lysine metabolism. This chain is HTH-type transcriptional regulator ArgP, found in Escherichia fergusonii (strain ATCC 35469 / DSM 13698 / CCUG 18766 / IAM 14443 / JCM 21226 / LMG 7866 / NBRC 102419 / NCTC 12128 / CDC 0568-73).